The following is a 353-amino-acid chain: Phospho-N-acetylmuramoyl-pentapeptide-transferase (353 aa).

Transmembrane regions (helical) follow at residues 22–42 (FAFFIALCLSLFLMPKFITWA), 65–85 (TPTMGGLIFISSAVIASLFCI), 88–108 (DNIFAISALLCLILFCLIGLI), 129–149 (LLAQIIAGLICILPLYFSSEL), 161–181 (PLFDMEIFAIAFWILVLISSS), 192–212 (GLATVPGIFSLSTLGIFLYLS), 228–248 (GLGEVVIICAALIGALMGFLW), 256–276 (VFMGDSGSLALGGFIGFLAVI), 281–301 (ILLLLIGFVFVLETVSVILQV), and 330–350 (KIIVRFWMIALLSNLLALASI).

Belongs to the glycosyltransferase 4 family. MraY subfamily. Mg(2+) serves as cofactor.

It is found in the cell inner membrane. It carries out the reaction UDP-N-acetyl-alpha-D-muramoyl-L-alanyl-gamma-D-glutamyl-meso-2,6-diaminopimeloyl-D-alanyl-D-alanine + di-trans,octa-cis-undecaprenyl phosphate = di-trans,octa-cis-undecaprenyl diphospho-N-acetyl-alpha-D-muramoyl-L-alanyl-D-glutamyl-meso-2,6-diaminopimeloyl-D-alanyl-D-alanine + UMP. It participates in cell wall biogenesis; peptidoglycan biosynthesis. Functionally, catalyzes the initial step of the lipid cycle reactions in the biosynthesis of the cell wall peptidoglycan: transfers peptidoglycan precursor phospho-MurNAc-pentapeptide from UDP-MurNAc-pentapeptide onto the lipid carrier undecaprenyl phosphate, yielding undecaprenyl-pyrophosphoryl-MurNAc-pentapeptide, known as lipid I. This chain is Phospho-N-acetylmuramoyl-pentapeptide-transferase, found in Campylobacter jejuni subsp. jejuni serotype O:2 (strain ATCC 700819 / NCTC 11168).